The sequence spans 341 residues: MEDFPVLEMVCLGSSVALSGLFYYIYRKKRKTVDKLKEAPVMALDAKLIDLLNATPGKCLQYVVVEGTVQPVGEPLRSQFQESSVGVIQKLVLREHKLVWNSLGRIWTDSERVLLQRVNAVPFNLLGLNKSFVRVLCPLEATGPKMEIVHEKFHQATYGFTDLIGQYLSGEKPKGQLETEEMLKVGASLTVVGELILDTDRLLKIRPPTDGSEYFLSSADFETLLMEQEGQAEVWRVFACICALAGVAVLIWTGRRYYRQLKLRWEQENLRREFEGMGTGEREEDNGVENACVICLSNPRGCVLLDCGHVCCCFRCYQALPQPFCPICRQHIKRVVPLYQA.

The Cytoplasmic portion of the chain corresponds to 1-5 (MEDFP). Residues 6 to 26 (VLEMVCLGSSVALSGLFYYIY) traverse the membrane as a helical segment. At 27–233 (RKKRKTVDKL…LLMEQEGQAE (207 aa)) the chain is on the mitochondrial intermembrane side. Residues 234-254 (VWRVFACICALAGVAVLIWTG) traverse the membrane as a helical segment. At 255–341 (RRYYRQLKLR…IKRVVPLYQA (87 aa)) the chain is on the cytoplasmic side. Residues 292 to 329 (CVICLSNPRGCVLLDCGHVCCCFRCYQALPQPFCPICR) form an RING-type zinc finger.

As to quaternary structure, homooligomer.

It localises to the mitochondrion outer membrane. It carries out the reaction S-ubiquitinyl-[E2 ubiquitin-conjugating enzyme]-L-cysteine + [acceptor protein]-L-lysine = [E2 ubiquitin-conjugating enzyme]-L-cysteine + N(6)-ubiquitinyl-[acceptor protein]-L-lysine.. It functions in the pathway protein modification; protein ubiquitination. Functionally, E3 ubiquitin-protein ligase that plays a role in the control of mitochondrial morphology. Promotes mitochondrial fragmentation and influences mitochondrial localization. Inhibits cell growth. E3 ubiquitin ligases accept ubiquitin from an E2 ubiquitin-conjugating enzyme in the form of a thioester and then directly transfer the ubiquitin to targeted substrates. In Danio rerio (Zebrafish), this protein is Mitochondrial ubiquitin ligase activator of nfkb 1-A (mul1a).